Here is a 525-residue protein sequence, read N- to C-terminus: Ent-kaurene oxidase (525 aa).

The helical transmembrane segment at 31–51 (VHWLIYVAFGAWLCSYVIHVL) threads the bilayer. C466 contacts heme.

Belongs to the cytochrome P450 family. The cofactor is heme.

Its subcellular location is the membrane. It carries out the reaction ent-kaur-16-ene + 3 reduced [NADPH--hemoprotein reductase] + 3 O2 = ent-kaur-16-en-19-oate + 3 oxidized [NADPH--hemoprotein reductase] + 4 H2O + 4 H(+). It functions in the pathway plant hormone biosynthesis; gibberellin biosynthesis. Its function is as follows. Catalyzes three successive oxidations of the 4-methyl group of ent-kaurene giving kaurenoic acid, a key step in gibberellin (GA) biosynthesis. In Fusarium fujikuroi (Bakanae and foot rot disease fungus), this protein is Ent-kaurene oxidase (CYP503A1).